We begin with the raw amino-acid sequence, 336 residues long: Biotin synthase (336 aa).

Residues 52–279 (KAIQLSTLMS…KSYVRLSAGR (228 aa)) form the Radical SAM core domain. Positions 67, 71, and 74 each coordinate [4Fe-4S] cluster. 4 residues coordinate [2Fe-2S] cluster: C111, C142, C202, and R274.

It belongs to the radical SAM superfamily. Biotin synthase family. As to quaternary structure, homodimer. Requires [4Fe-4S] cluster as cofactor. The cofactor is [2Fe-2S] cluster.

The enzyme catalyses (4R,5S)-dethiobiotin + (sulfur carrier)-SH + 2 reduced [2Fe-2S]-[ferredoxin] + 2 S-adenosyl-L-methionine = (sulfur carrier)-H + biotin + 2 5'-deoxyadenosine + 2 L-methionine + 2 oxidized [2Fe-2S]-[ferredoxin]. It functions in the pathway cofactor biosynthesis; biotin biosynthesis; biotin from 7,8-diaminononanoate: step 2/2. In terms of biological role, catalyzes the conversion of dethiobiotin (DTB) to biotin by the insertion of a sulfur atom into dethiobiotin via a radical-based mechanism. The polypeptide is Biotin synthase (Pasteurella multocida (strain Pm70)).